Here is a 213-residue protein sequence, read N- to C-terminus: Ras-related protein Rab-4B (213 aa).

The residue at position 2 (Ala2) is an N-acetylalanine. GDP contacts are provided by Gly18, Thr19, Gly20, Lys21, Ser22, and Cys23. GTP-binding residues include Gly18, Thr19, Gly20, Lys21, Ser22, Cys23, Ser37, His39, and Thr40. Ser22 provides a ligand contact to Mg(2+). Residues 39–44 (HTIGVE) carry the Switch 1 motif. Positions 40 and 63 each coordinate Mg(2+). The short motif at 65-74 (AGQERFRSVT) is the Switch 2 element. Gly66 is a binding site for GTP. Position 67 is a 5-glutamyl serotonin (Gln67). Asn121, Lys122, Asp124, Ala152, and Leu153 together coordinate GDP. GTP is bound by residues Asn121, Lys122, Asp124, Ala152, and Leu153. 2 positions are modified to phosphoserine: Ser185 and Ser193. Residues Cys211 and Cys213 are each lipidated (S-geranylgeranyl cysteine). Position 213 is a cysteine methyl ester (Cys213).

It belongs to the small GTPase superfamily. Rab family. Interacts (GTP-bound form) with RUFY1; the interaction allows endosomal tethering and fusion. It depends on Mg(2+) as a cofactor. Post-translationally, serotonylation of Gln-67 by TGM2 during activation and aggregation of platelets leads to constitutive activation of GTPase activity.

Its subcellular location is the cell membrane. It is found in the early endosome membrane. It catalyses the reaction GTP + H2O = GDP + phosphate + H(+). Its activity is regulated as follows. Regulated by guanine nucleotide exchange factors (GEFs) which promote the exchange of bound GDP for free GTP. Regulated by GTPase activating proteins (GAPs) which increase the GTP hydrolysis activity. Inhibited by GDP dissociation inhibitors (GDIs). Its function is as follows. The small GTPases Rab are key regulators of intracellular membrane trafficking, from the formation of transport vesicles to their fusion with membranes. Rabs cycle between an inactive GDP-bound form and an active GTP-bound form that is able to recruit to membranes different set of downstream effectors directly responsible for vesicle formation, movement, tethering and fusion. RAB4B mediates endosomal tethering and fusion through the interaction with RUFY1 and RAB14. Acts as a regulator of platelet alpha-granule release during activation and aggregation of platelets. The sequence is that of Ras-related protein Rab-4B from Homo sapiens (Human).